The sequence spans 369 residues: MEFLERTYLVNDKAAKMYAFTLESVELQQKPVNKDQCPRERPEELESGGMYHCHSGSKPTEKGANEYAYAKWKLCSASAICFIFMIAEVVGGHIAGSLAVVTDAAHLLIDLTSFLLSLFSLWLSSKPPSKRLTFGWHRAEILGALLSILCIWVVTGVLVYLACERLLYPDYQIQATVMIIVSSCAVAANIVLTVVLHQRCLGHNHKEVQANASVRAAFVHALGDLFQSISVLISALIIYFKPEYKIADPICTFIFSILVLASTITILKDFSILLMEGVPKSLNYSGVKELILAVDGVLSVHSLHIWSLTMNQVILSAHVATAASRDSQVVRREIAKALSKSFTMHSLTIQMESPVDQDPDCLFCEDPCD.

Residues Met-1–Ala-79 are Cytoplasmic-facing. Positions Pro-31 to His-52 are disordered. A compositionally biased stretch (basic and acidic residues) spans Val-32 to Glu-44. Residues His-52, Cys-53, and His-54 each contribute to the Zn(2+) site. The HCH Motif; seals regulatory zinc-binding pocket motif lies at His-52 to His-54. Residues Ile-80–Val-100 form a helical membrane-spanning segment. Topologically, residues Val-101–Asp-103 are lumenal, vesicle. The helical transmembrane segment at Ala-104–Ser-124 threads the bilayer. His-106, Asp-110, and His-137 together coordinate Zn(2+). Over Ser-125–Glu-140 the chain is Cytoplasmic. Residues Ile-141–Leu-161 traverse the membrane as a helical segment. Over Ala-162–Ala-175 the chain is Lumenal, vesicle. The chain crosses the membrane as a helical span at residues Thr-176 to Leu-196. Topologically, residues His-197–Ala-217 are cytoplasmic. A helical transmembrane segment spans residues Phe-218 to Ile-238. 2 residues coordinate Zn(2+): His-220 and Asp-224. The Lumenal, vesicle portion of the chain corresponds to Tyr-239 to Lys-245. The chain crosses the membrane as a helical span at residues Ile-246 to Ile-266. Residues Leu-267–Asp-369 lie on the Cytoplasmic side of the membrane. His-301, His-318, His-345, Glu-352, Cys-361, and Cys-364 together coordinate Zn(2+).

It belongs to the cation diffusion facilitator (CDF) transporter (TC 2.A.4) family. SLC30A subfamily. As to quaternary structure, homodimer. In the endocrine pancreas, expressed in insulin-producing beta cells. Expressed at relatively high levels in subcutaneous fat tissue from lean persons; much lower levels in visceral fat, whether from lean or obese individuals, and in subcutaneous fat tissue from obese individuals. Expressed in peripheral blood mononuclear cells, including T-cells and B-cells, with great variation among individuals ranging from negative to strongly positive.

It is found in the cytoplasmic vesicle. It localises to the secretory vesicle membrane. The protein localises to the cell membrane. The catalysed reaction is Zn(2+)(in) + 2 H(+)(out) = Zn(2+)(out) + 2 H(+)(in). In terms of biological role, proton-coupled zinc ion antiporter mediating the entry of zinc into the lumen of pancreatic beta cell secretory granules, thereby regulating insulin secretion. This is Proton-coupled zinc antiporter SLC30A8 from Homo sapiens (Human).